A 459-amino-acid chain; its full sequence is Fibrinogen C domain-containing protein 1 (459 aa).

Positions 1 to 22 (MVHERWKTVGSASQLEDRPRDK) are disordered. Over 1–33 (MVHERWKTVGSASQLEDRPRDKPQRASCSYVLC) the chain is Cytoplasmic. A helical; Signal-anchor for type II membrane protein transmembrane segment spans residues 34–54 (TVLLSLAVLLAVAVTGVVLFL). The Extracellular segment spans residues 55-459 (NHTHTPGTAP…MKIRPVREDR (405 aa)). The Fibrinogen C-terminal domain occupies 233 to 456 (CANGSRPRDC…FSEMKIRPVR (224 aa)). Residues cysteine 242 and cysteine 271 are joined by a disulfide bond. Asparagine 338 carries N-linked (GlcNAc...) asparagine glycosylation. The Ca(2+) site is built by aspartate 391 and aspartate 393. Cysteines 399 and 412 form a disulfide.

As to quaternary structure, homotetramer; disulfide-linked.

The protein resides in the membrane. Its function is as follows. Acetyl group-binding receptor which shows a high-affinity and calcium-dependent binding to acetylated structures such as chitin, some N-acetylated carbohydrates, and amino acids, but not to their non-acetylated counterparts. Can facilitate the endocytosis of acetylated components. This chain is Fibrinogen C domain-containing protein 1 (Fibcd1), found in Mus musculus (Mouse).